The following is a 221-amino-acid chain: Casparian strip membrane protein 3 (221 aa).

A compositionally biased stretch (basic and acidic residues) spans 1–12 (MDIEKAGSRREE). The disordered stretch occupies residues 1-27 (MDIEKAGSRREEEEPIVQRPKLDKGKG). The Cytoplasmic segment spans residues 1–58 (MDIEKAGSRREEEEPIVQRPKLDKGKGKAHVFAPPMNYNRIMDKHKQEKMSPAGWKRG). A helical transmembrane segment spans residues 59 to 79 (VAIFDFVLRLIAAITAMAAAA). Topologically, residues 80-109 (KMATTEETLPFFTQFLQFQADYTDLPTMSS) are extracellular. Residues 110 to 130 (FVIVNSIVGGYLTLSLPFSIV) form a helical membrane-spanning segment. The Cytoplasmic portion of the chain corresponds to 131-148 (CILRPLAVPPRLFLILCD). Residues 149–169 (TVMMGLTLMAASASAAIVYLA) traverse the membrane as a helical segment. Topologically, residues 170–194 (HNGNSSSNWLPVCQQFGDFCQGTSG) are extracellular. An N-linked (GlcNAc...) asparagine glycan is attached at N173. Residues 195 to 215 (AVVASFIAATLLMFLVILSAF) traverse the membrane as a helical segment. At 216–221 (ALKRTT) the chain is on the cytoplasmic side.

The protein belongs to the Casparian strip membrane proteins (CASP) family. As to quaternary structure, homodimer and heterodimers with other CASP proteins. Interacts with CASP1, CASP2, CASP4 and CASP5.

It is found in the cell membrane. Its function is as follows. Regulates membrane-cell wall junctions and localized cell wall deposition. Required for establishment of the Casparian strip membrane domain (CSD) and the subsequent formation of Casparian strips, a cell wall modification of the root endodermis that determines an apoplastic barrier between the intraorganismal apoplasm and the extraorganismal apoplasm and prevents lateral diffusion. The sequence is that of Casparian strip membrane protein 3 (CASP3) from Arabidopsis thaliana (Mouse-ear cress).